We begin with the raw amino-acid sequence, 206 residues long: Ribosomal RNA large subunit methyltransferase E (206 aa).

S-adenosyl-L-methionine contacts are provided by Gly61, Trp63, Asp81, Asp97, and Asp122. The active-site Proton acceptor is Lys162.

Belongs to the class I-like SAM-binding methyltransferase superfamily. RNA methyltransferase RlmE family.

The protein localises to the cytoplasm. The enzyme catalyses uridine(2552) in 23S rRNA + S-adenosyl-L-methionine = 2'-O-methyluridine(2552) in 23S rRNA + S-adenosyl-L-homocysteine + H(+). Its function is as follows. Specifically methylates the uridine in position 2552 of 23S rRNA at the 2'-O position of the ribose in the fully assembled 50S ribosomal subunit. The protein is Ribosomal RNA large subunit methyltransferase E of Neisseria gonorrhoeae (strain NCCP11945).